The following is a 161-amino-acid chain: Large ribosomal subunit protein uL11 (161 aa).

Belongs to the universal ribosomal protein uL11 family. As to quaternary structure, part of the ribosomal stalk of the 50S ribosomal subunit. Interacts with L10 and the large rRNA to form the base of the stalk. L10 forms an elongated spine to which L12 dimers bind in a sequential fashion forming a multimeric L10(L12)X complex.

Its function is as follows. Forms part of the ribosomal stalk which helps the ribosome interact with GTP-bound translation factors. This Methanocaldococcus jannaschii (strain ATCC 43067 / DSM 2661 / JAL-1 / JCM 10045 / NBRC 100440) (Methanococcus jannaschii) protein is Large ribosomal subunit protein uL11.